A 415-amino-acid polypeptide reads, in one-letter code: Serine--tRNA ligase (415 aa).

230–232 serves as a coordination point for L-serine; sequence TAE. 261–263 lines the ATP pocket; sequence RKE. Glutamate 284 provides a ligand contact to L-serine. 348–351 contributes to the ATP binding site; the sequence is EISS. Position 382 (serine 382) interacts with L-serine.

It belongs to the class-II aminoacyl-tRNA synthetase family. Type-1 seryl-tRNA synthetase subfamily. As to quaternary structure, homodimer. The tRNA molecule binds across the dimer.

The protein resides in the cytoplasm. It carries out the reaction tRNA(Ser) + L-serine + ATP = L-seryl-tRNA(Ser) + AMP + diphosphate + H(+). The enzyme catalyses tRNA(Sec) + L-serine + ATP = L-seryl-tRNA(Sec) + AMP + diphosphate + H(+). Its pathway is aminoacyl-tRNA biosynthesis; selenocysteinyl-tRNA(Sec) biosynthesis; L-seryl-tRNA(Sec) from L-serine and tRNA(Sec): step 1/1. In terms of biological role, catalyzes the attachment of serine to tRNA(Ser). Is also able to aminoacylate tRNA(Sec) with serine, to form the misacylated tRNA L-seryl-tRNA(Sec), which will be further converted into selenocysteinyl-tRNA(Sec). The sequence is that of Serine--tRNA ligase from Sulfurimonas denitrificans (strain ATCC 33889 / DSM 1251) (Thiomicrospira denitrificans (strain ATCC 33889 / DSM 1251)).